A 455-amino-acid polypeptide reads, in one-letter code: NADH-quinone oxidoreductase subunit N (455 aa).

Transmembrane regions (helical) follow at residues 25-45 (AIVPITIIGLLAIFGFNISEY), 61-81 (FSVAFSSLFIIITVFLVALSH), 99-119 (VFLLSGAVAMVSFGNLSMFFL), 149-169 (FLMGSFASGIILFGICLIYGA), 193-213 (IGIVFLLIGMLFKIATVPFHF), 257-277 (IQIIIVCVAIASMLLGNIMAL), 285-305 (MFAFSGISHAGFMVSTLLLTS), 312-332 (LYYASAYAIAGIAFFAVVMYV), 355-375 (AGILTAALLSMAGIPVLSGFF), 391-411 (IVVFVAIISSIISVGYYFKII), and 432-452 (IVAVVALILNIALGLFPNVVL).

Belongs to the complex I subunit 2 family. As to quaternary structure, NDH-1 is composed of 14 different subunits. Subunits NuoA, H, J, K, L, M, N constitute the membrane sector of the complex.

The protein resides in the cell inner membrane. The enzyme catalyses a quinone + NADH + 5 H(+)(in) = a quinol + NAD(+) + 4 H(+)(out). Its function is as follows. NDH-1 shuttles electrons from NADH, via FMN and iron-sulfur (Fe-S) centers, to quinones in the respiratory chain. The immediate electron acceptor for the enzyme in this species is believed to be a menaquinone. Couples the redox reaction to proton translocation (for every two electrons transferred, four hydrogen ions are translocated across the cytoplasmic membrane), and thus conserves the redox energy in a proton gradient. The protein is NADH-quinone oxidoreductase subunit N of Flavobacterium psychrophilum (strain ATCC 49511 / DSM 21280 / CIP 103535 / JIP02/86).